We begin with the raw amino-acid sequence, 70 residues long: MMRDAEERITRLEETVAHQLKTIEELSDQLAEQWKVVEQTRAKLDRLTERFLSLEEQAQDATPVTRPPHY.

It belongs to the SlyX family.

This Rhizobium meliloti (strain 1021) (Ensifer meliloti) protein is Protein SlyX homolog.